The sequence spans 415 residues: CCA-adding enzyme (415 aa).

The ATP site is built by serine 52 and arginine 55. 2 residues coordinate CTP: serine 52 and arginine 55. Aspartate 64, aspartate 66, and aspartate 116 together coordinate Mg(2+). ATP-binding residues include histidine 139, lysine 159, and tyrosine 168. CTP is bound by residues histidine 139, lysine 159, and tyrosine 168.

Belongs to the tRNA nucleotidyltransferase/poly(A) polymerase family. Archaeal CCA-adding enzyme subfamily. Homodimer. Mg(2+) is required as a cofactor.

The enzyme catalyses a tRNA precursor + 2 CTP + ATP = a tRNA with a 3' CCA end + 3 diphosphate. It catalyses the reaction a tRNA with a 3' CCA end + 2 CTP + ATP = a tRNA with a 3' CCACCA end + 3 diphosphate. Functionally, catalyzes the addition and repair of the essential 3'-terminal CCA sequence in tRNAs without using a nucleic acid template. Adds these three nucleotides in the order of C, C, and A to the tRNA nucleotide-73, using CTP and ATP as substrates and producing inorganic pyrophosphate. tRNA 3'-terminal CCA addition is required both for tRNA processing and repair. Also involved in tRNA surveillance by mediating tandem CCA addition to generate a CCACCA at the 3' terminus of unstable tRNAs. While stable tRNAs receive only 3'-terminal CCA, unstable tRNAs are marked with CCACCA and rapidly degraded. The sequence is that of CCA-adding enzyme from Pyrobaculum neutrophilum (strain DSM 2338 / JCM 9278 / NBRC 100436 / V24Sta) (Thermoproteus neutrophilus).